A 210-amino-acid polypeptide reads, in one-letter code: Neurotrophin-4 (210 aa).

The N-terminal stretch at M1–S24 is a signal peptide. Positions Q25–R80 are excised as a propeptide. The N-linked (GlcNAc...) asparagine glycan is linked to N76. 3 disulfides stabilise this stretch: C97–C170, C141–C199, and C158–C201.

It belongs to the NGF-beta family. As to expression, highest levels in prostate, lower levels in thymus, placenta, and skeletal muscle. Expressed in embryonic and adult tissues.

The protein localises to the secreted. Its function is as follows. Target-derived survival factor for peripheral sensory sympathetic neurons. May promote ameloblast differentiation and subsequent reduction in proliferation of ameloblasts. The polypeptide is Neurotrophin-4 (NTF4) (Homo sapiens (Human)).